The primary structure comprises 380 residues: Cytochrome b (380 aa).

4 helical membrane-spanning segments follow: residues 33–53 (FGSL…FLAM), 77–98 (WLIR…FLHV), 113–133 (WNMG…GYVL), and 178–198 (FFAF…VHLL). Heme b-binding residues include His-83 and His-97. Heme b contacts are provided by His-182 and His-196. His-201 is a binding site for a ubiquinone. The next 4 helical transmembrane spans lie at 226–246 (IKDF…TLFF), 288–308 (LGGV…PLLH), 320–340 (ITQT…WIGG), and 347–367 (FIII…ILMP).

This sequence belongs to the cytochrome b family. The cytochrome bc1 complex contains 11 subunits: 3 respiratory subunits (MT-CYB, CYC1 and UQCRFS1), 2 core proteins (UQCRC1 and UQCRC2) and 6 low-molecular weight proteins (UQCRH/QCR6, UQCRB/QCR7, UQCRQ/QCR8, UQCR10/QCR9, UQCR11/QCR10 and a cleavage product of UQCRFS1). This cytochrome bc1 complex then forms a dimer. Heme b is required as a cofactor.

It is found in the mitochondrion inner membrane. Component of the ubiquinol-cytochrome c reductase complex (complex III or cytochrome b-c1 complex) that is part of the mitochondrial respiratory chain. The b-c1 complex mediates electron transfer from ubiquinol to cytochrome c. Contributes to the generation of a proton gradient across the mitochondrial membrane that is then used for ATP synthesis. The sequence is that of Cytochrome b (MT-CYB) from Microtus guentheri (Gunther's vole).